The sequence spans 67 residues: Large ribosomal subunit protein uL30 (67 aa).

The protein belongs to the universal ribosomal protein uL30 family. In terms of assembly, part of the 50S ribosomal subunit.

This Hamiltonella defensa subsp. Acyrthosiphon pisum (strain 5AT) protein is Large ribosomal subunit protein uL30.